The sequence spans 147 residues: Protein-export protein SecB 2 (147 aa).

This sequence belongs to the SecB family. In terms of assembly, homotetramer, a dimer of dimers. One homotetramer interacts with 1 SecA dimer.

Its subcellular location is the cytoplasm. In terms of biological role, one of the proteins required for the normal export of preproteins out of the cell cytoplasm. It is a molecular chaperone that binds to a subset of precursor proteins, maintaining them in a translocation-competent state. It also specifically binds to its receptor SecA. This chain is Protein-export protein SecB 2, found in Francisella tularensis subsp. holarctica (strain FTNF002-00 / FTA).